A 342-amino-acid chain; its full sequence is UDP-3-O-acylglucosamine N-acyltransferase (342 aa).

The active-site Proton acceptor is H241.

It belongs to the transferase hexapeptide repeat family. LpxD subfamily. Homotrimer.

It catalyses the reaction a UDP-3-O-[(3R)-3-hydroxyacyl]-alpha-D-glucosamine + a (3R)-hydroxyacyl-[ACP] = a UDP-2-N,3-O-bis[(3R)-3-hydroxyacyl]-alpha-D-glucosamine + holo-[ACP] + H(+). It functions in the pathway bacterial outer membrane biogenesis; LPS lipid A biosynthesis. Catalyzes the N-acylation of UDP-3-O-acylglucosamine using 3-hydroxyacyl-ACP as the acyl donor. Is involved in the biosynthesis of lipid A, a phosphorylated glycolipid that anchors the lipopolysaccharide to the outer membrane of the cell. The sequence is that of UDP-3-O-acylglucosamine N-acyltransferase from Pasteurella multocida (strain Pm70).